Here is a 523-residue protein sequence, read N- to C-terminus: Sorting nexin-2 (523 aa).

The tract at residues 1–104 (MAAEREPPPL…EPSPAVTPVT (104 aa)) is disordered. Low complexity-rich tracts occupy residues 27-48 (LFTSTVSTLESSPSSPEPTSLP) and 93-104 (SSEPSPAVTPVT). Ser-97 is subject to Phosphoserine. A phosphothreonine mark is found at Thr-101 and Thr-104. 2 positions are modified to phosphoserine: Ser-117 and Ser-119. A PX domain is found at 140 to 269 (FDIEIGVSDP…QFLESSELPR (130 aa)). The a 1,2-diacyl-sn-glycero-3-phospho-(1D-myo-inositol-3-phosphate) site is built by Arg-183, Ser-185, Lys-211, and Arg-235. Ser-185 bears the Phosphoserine mark. The segment at 260 to 523 (QFLESSELPR…AFLPEAKAIA (264 aa)) is interaction with RhoG. Phosphoserine is present on Ser-277. Residues 278–295 (GAGILRMVNKAADAVNKM) are membrane-binding amphipathic helix. The region spanning 299–523 (MNESDAWFEE…AFLPEAKAIA (225 aa)) is the BAR domain. N6-acetyllysine is present on Lys-473.

The protein belongs to the sorting nexin family. As to quaternary structure, predominantly forms heterodimers with BAR domain-containing sorting nexins SNX5, SNX6 and SNX32; can self-associate to form homodimers. The heterodimers are proposed to self-assemble into helical arrays on the membrane to stabilize and expand local membrane curvature underlying endosomal tubule formation. Thought to be a component of the originally described retromer complex (also called SNX-BAR retromer) which is a pentamer containing the heterotrimeric retromer cargo-selective complex (CSC), also described as vacuolar protein sorting subcomplex (VPS), and a heterodimeric membrane-deforming subcomplex formed between SNX1 or SNX2 and SNX5 or SNX6 (also called SNX-BAR subcomplex); the respective CSC and SNX-BAR subcomplexes associate with low affinity. Interacts with SNX5, SNX6, SNX32, VPS26A, VPS29, VPS35, FNBP1, KALRN, RHOG (GDP-bound form).

The protein localises to the early endosome membrane. Its subcellular location is the cell projection. It is found in the lamellipodium. In terms of biological role, involved in several stages of intracellular trafficking. Interacts with membranes containing phosphatidylinositol 3-phosphate (PtdIns(3P)) or phosphatidylinositol 3,5-bisphosphate (PtdIns(3,5)P2). Acts in part as component of the retromer membrane-deforming SNX-BAR subcomplex. The SNX-BAR retromer mediates retrograde transport of cargo proteins from endosomes to the trans-Golgi network (TGN) and is involved in endosome-to-plasma membrane transport for cargo protein recycling. The SNX-BAR subcomplex functions to deform the donor membrane into a tubular profile called endosome-to-TGN transport carrier (ETC). Can sense membrane curvature and has in vitro vesicle-to-membrane remodeling activity. Required for retrograde endosome-to-TGN transport of TGN38. Promotes KALRN- and RHOG-dependent but retromer-independent membrane remodeling such as lamellipodium formation; the function is dependent on GEF activity of KALRN. In Pongo abelii (Sumatran orangutan), this protein is Sorting nexin-2 (SNX2).